Here is a 559-residue protein sequence, read N- to C-terminus: Protein NRT1/ PTR FAMILY 2.8 (559 aa).

Helical transmembrane passes span 57–77 (GVFL…LTLA), 92–112 (LLLG…TAAL), 132–152 (KWQL…AGGV), 178–198 (FFNW…TGVV), 206–226 (WVIG…TFVI), 321–341 (LKCV…FILT), 374–394 (VSMI…IPIV), 404–424 (LTLK…VAGF), 437–457 (GSFV…LAGL), 481–501 (VAGA…TLLI), and 529–549 (YFFI…LFAS).

Belongs to the major facilitator superfamily. Proton-dependent oligopeptide transporter (POT/PTR) (TC 2.A.17) family. Expressed in flowers.

The protein localises to the membrane. In Arabidopsis thaliana (Mouse-ear cress), this protein is Protein NRT1/ PTR FAMILY 2.8 (NPF2.8).